The sequence spans 302 residues: N-acetylmuramic acid 6-phosphate etherase (302 aa).

The region spanning 58–221 (IFERFKKGGR…TTTLMIKLGK (164 aa)) is the SIS domain. Glu-86 (proton donor) is an active-site residue. Glu-117 is a catalytic residue.

It belongs to the GCKR-like family. MurNAc-6-P etherase subfamily. As to quaternary structure, homodimer.

The catalysed reaction is N-acetyl-D-muramate 6-phosphate + H2O = N-acetyl-D-glucosamine 6-phosphate + (R)-lactate. It functions in the pathway amino-sugar metabolism; N-acetylmuramate degradation. Specifically catalyzes the cleavage of the D-lactyl ether substituent of MurNAc 6-phosphate, producing GlcNAc 6-phosphate and D-lactate. This is N-acetylmuramic acid 6-phosphate etherase from Mycoplasma mycoides subsp. mycoides SC (strain CCUG 32753 / NCTC 10114 / PG1).